Reading from the N-terminus, the 228-residue chain is Ribosomal RNA small subunit methyltransferase G (228 aa).

S-adenosyl-L-methionine-binding positions include glycine 89, leucine 94, 140 to 141, and arginine 159; that span reads VE.

The protein belongs to the methyltransferase superfamily. RNA methyltransferase RsmG family.

The protein localises to the cytoplasm. It catalyses the reaction guanosine(527) in 16S rRNA + S-adenosyl-L-methionine = N(7)-methylguanosine(527) in 16S rRNA + S-adenosyl-L-homocysteine. Specifically methylates the N7 position of guanine in position 527 of 16S rRNA. This chain is Ribosomal RNA small subunit methyltransferase G, found in Burkholderia cenocepacia (strain ATCC BAA-245 / DSM 16553 / LMG 16656 / NCTC 13227 / J2315 / CF5610) (Burkholderia cepacia (strain J2315)).